The following is a 417-amino-acid chain: Serine hydroxymethyltransferase (417 aa).

(6S)-5,6,7,8-tetrahydrofolate is bound by residues L122 and 126-128 (GHL). Residue K230 is modified to N6-(pyridoxal phosphate)lysine. 355-357 (SPF) serves as a coordination point for (6S)-5,6,7,8-tetrahydrofolate.

Belongs to the SHMT family. As to quaternary structure, homodimer. Pyridoxal 5'-phosphate is required as a cofactor.

The protein resides in the cytoplasm. The enzyme catalyses (6R)-5,10-methylene-5,6,7,8-tetrahydrofolate + glycine + H2O = (6S)-5,6,7,8-tetrahydrofolate + L-serine. It participates in one-carbon metabolism; tetrahydrofolate interconversion. The protein operates within amino-acid biosynthesis; glycine biosynthesis; glycine from L-serine: step 1/1. Functionally, catalyzes the reversible interconversion of serine and glycine with tetrahydrofolate (THF) serving as the one-carbon carrier. This reaction serves as the major source of one-carbon groups required for the biosynthesis of purines, thymidylate, methionine, and other important biomolecules. Also exhibits THF-independent aldolase activity toward beta-hydroxyamino acids, producing glycine and aldehydes, via a retro-aldol mechanism. This chain is Serine hydroxymethyltransferase, found in Francisella tularensis subsp. mediasiatica (strain FSC147).